A 367-amino-acid polypeptide reads, in one-letter code: Phosphoribosylaminoimidazole-succinocarboxamide synthase (367 aa).

This sequence belongs to the SAICAR synthetase family.

The enzyme catalyses 5-amino-1-(5-phospho-D-ribosyl)imidazole-4-carboxylate + L-aspartate + ATP = (2S)-2-[5-amino-1-(5-phospho-beta-D-ribosyl)imidazole-4-carboxamido]succinate + ADP + phosphate + 2 H(+). It functions in the pathway purine metabolism; IMP biosynthesis via de novo pathway; 5-amino-1-(5-phospho-D-ribosyl)imidazole-4-carboxamide from 5-amino-1-(5-phospho-D-ribosyl)imidazole-4-carboxylate: step 1/2. The chain is Phosphoribosylaminoimidazole-succinocarboxamide synthase from Shewanella piezotolerans (strain WP3 / JCM 13877).